Here is a 45-residue protein sequence, read N- to C-terminus: Rubredoxin-1 (45 aa).

Met-1 is subject to N-formylmethionine. The Rubredoxin-like domain maps to 1-45; the sequence is MQKYVCNVCGYEYDPAEHDNVPFDQLPDDWCCPVCGVSKDQFSPA. Fe cation is bound by residues Cys-6, Cys-9, Cys-32, and Cys-35.

This sequence belongs to the rubredoxin family. Fe(3+) is required as a cofactor.

The protein resides in the cytoplasm. In terms of biological role, rubredoxin is a small nonheme, iron protein lacking acid-labile sulfide. Its single Fe, chelated to 4 Cys, functions as an electron acceptor and may also stabilize the conformation of the molecule. Functionally, electron acceptor for cytoplasmic lactate dehydrogenase. The polypeptide is Rubredoxin-1 (rd1) (Desulfovibrio desulfuricans (strain ATCC 27774 / DSM 6949 / MB)).